The following is a 497-amino-acid chain: tRNA-2-methylthio-N(6)-dimethylallyladenosine synthase (497 aa).

The tract at residues 1–50 (MTGTSNIPTHGKEHKDAPALLPLPAPNPHHTHAAHPGNPSHDRPPSRGKL) is disordered. The MTTase N-terminal domain occupies 48 to 165 (GKLFIKTHGC…LPDMIRARRE (118 aa)). Residues C57, C94, C128, C202, C206, and C209 each coordinate [4Fe-4S] cluster. Positions 188-430 (RAEGPSAFVS…QKHINTYAAD (243 aa)) constitute a Radical SAM core domain. Residues 433-496 (KRMIGTVQTV…SNSLRGRVHT (64 aa)) form the TRAM domain.

The protein belongs to the methylthiotransferase family. MiaB subfamily. Monomer. [4Fe-4S] cluster serves as cofactor.

The protein localises to the cytoplasm. The catalysed reaction is N(6)-dimethylallyladenosine(37) in tRNA + (sulfur carrier)-SH + AH2 + 2 S-adenosyl-L-methionine = 2-methylsulfanyl-N(6)-dimethylallyladenosine(37) in tRNA + (sulfur carrier)-H + 5'-deoxyadenosine + L-methionine + A + S-adenosyl-L-homocysteine + 2 H(+). Catalyzes the methylthiolation of N6-(dimethylallyl)adenosine (i(6)A), leading to the formation of 2-methylthio-N6-(dimethylallyl)adenosine (ms(2)i(6)A) at position 37 in tRNAs that read codons beginning with uridine. This Xylella fastidiosa (strain 9a5c) protein is tRNA-2-methylthio-N(6)-dimethylallyladenosine synthase.